We begin with the raw amino-acid sequence, 107 residues long: High mobility group protein HMG-I/HMG-Y (107 aa).

The segment at 1–107 (MSESSSKSSQ…ISQESSEEEQ (107 aa)) is disordered. At Ser2 the chain carries N-acetylserine. Lys7 is subject to N6-acetyllysine. Ser8 is subject to ADP-ribosylserine. ADP-ribosylserine; alternate is present on Ser9. Ser9 is modified (phosphoserine; alternate). Lys15 bears the N6-acetyllysine; alternate mark. Lys15 participates in a covalent cross-link: Glycyl lysine isopeptide (Lys-Gly) (interchain with G-Cter in SUMO2); alternate. The segment covering 15-24 (KQEKDGTEKR) has biased composition (basic and acidic residues). The a.T hook 1 DNA-binding region spans 21-31 (TEKRGRGRPRK). Arg26 carries the asymmetric dimethylarginine; alternate modification. Residue Arg26 is modified to Omega-N-methylarginine; alternate. Residue Arg26 is modified to Symmetric dimethylarginine; alternate. Ser36 carries the phosphoserine; by HIPK2 and CDC2 modification. The residue at position 39 (Thr39) is a Phosphothreonine. A phosphoserine mark is found at Ser44 and Ser49. Thr53 is subject to Phosphothreonine; by HIPK2 and CDC2. 2 DNA-binding regions (a.T hook) span residues 53–63 (TPKRPRGRPKG) and 78–89 (APGRKPRGRPKK). The interval 53–77 (TPKRPRGRPKGSKNKGAAKTRKATT) is interaction with HIPK2. Basic residues predominate over residues 55–74 (KRPRGRPKGSKNKGAAKTRK). An asymmetric dimethylarginine; by PRMT6; alternate mark is found at Arg58 and Arg60. Omega-N-methylarginine; by PRMT6; alternate is present on residues Arg58 and Arg60. Positions 93–107 (EEEEGISQESSEEEQ) are enriched in acidic residues. Ser99, Ser102, and Ser103 each carry phosphoserine.

The protein belongs to the HMGA family. As to quaternary structure, interacts with HIPK2. Isoforms HMG-I and HMG-Y can be phosphorylated by HIPK2. Phosphorylation may modulate DNA-binding affinity. In terms of processing, methylation at Arg-58 is mutually exclusive with methylation at Arg-60.

It localises to the nucleus. It is found in the chromosome. Its function is as follows. HMG-I/Y bind preferentially to the minor groove of A+T rich regions in double-stranded DNA. It is suggested that these proteins could function in nucleosome phasing and in the 3'-end processing of mRNA transcripts. They are also involved in the transcription regulation of genes containing, or in close proximity to A+T-rich regions. The polypeptide is High mobility group protein HMG-I/HMG-Y (HMGA1) (Cricetulus griseus (Chinese hamster)).